The chain runs to 433 residues: MEKLTLTPISHVEGTVNLPGSKSLSNRALLLAALAKGTTRVTNLLDSDDVRHMLNALKQLGVNYSLSEDKSVCEVQGLGKAFAWQNGLALFLGNAGTAMRPLTAALCLANADSVPAEIILTGEPRMKERPIKHLVDALLQAGADVQYLEQEGYPPLAIRNTGLKGGKVKIDGSVSSQFLTALLMAAPMAERDTEIEIIGELVSKPYIDITLNMMKIFAVDVDNQNYQRFVVKGNQQYQSPNIFLVEGDASSASYFLAAGAIKGKVRVTGVGKNSIQGDRLFAEVLEKMGAKITWGEDYIEAERGELNGIDMDMNHIPDAAMTIATTALFAQGETVIRNIYNWRVKETDRLSAMATELRKVGAEVEEGEDFIRIQPPASDQFKHAEIETYNDHRMAMCFALVALSNTAVTICDPKCTAKTFPTFFDEFSAIATV.

3-phosphoshikimate contacts are provided by lysine 22, serine 23, and arginine 27. Lysine 22 contacts phosphoenolpyruvate. Residues glycine 96 and arginine 129 each coordinate phosphoenolpyruvate. 3-phosphoshikimate is bound by residues serine 175, serine 176, glutamine 177, serine 203, aspartate 318, asparagine 341, and lysine 345. Glutamine 177 is a phosphoenolpyruvate binding site. Catalysis depends on aspartate 318, which acts as the Proton acceptor. Phosphoenolpyruvate is bound by residues arginine 349, arginine 393, and lysine 418.

This sequence belongs to the EPSP synthase family. As to quaternary structure, monomer.

The protein localises to the cytoplasm. It catalyses the reaction 3-phosphoshikimate + phosphoenolpyruvate = 5-O-(1-carboxyvinyl)-3-phosphoshikimate + phosphate. Its pathway is metabolic intermediate biosynthesis; chorismate biosynthesis; chorismate from D-erythrose 4-phosphate and phosphoenolpyruvate: step 6/7. Catalyzes the transfer of the enolpyruvyl moiety of phosphoenolpyruvate (PEP) to the 5-hydroxyl of shikimate-3-phosphate (S3P) to produce enolpyruvyl shikimate-3-phosphate and inorganic phosphate. The protein is 3-phosphoshikimate 1-carboxyvinyltransferase of Mannheimia succiniciproducens (strain KCTC 0769BP / MBEL55E).